A 495-amino-acid polypeptide reads, in one-letter code: Adenosylhomocysteinase (495 aa).

Substrate-binding residues include threonine 71, aspartate 156, and glutamate 218. 219–221 (TTT) contacts NAD(+). Lysine 248 and aspartate 252 together coordinate substrate. NAD(+)-binding positions include asparagine 253, 282 to 287 (GYGDVG), glutamate 305, asparagine 340, 361 to 363 (IGH), and asparagine 409.

It belongs to the adenosylhomocysteinase family. NAD(+) serves as cofactor.

The protein resides in the cytoplasm. The enzyme catalyses S-adenosyl-L-homocysteine + H2O = L-homocysteine + adenosine. It functions in the pathway amino-acid biosynthesis; L-homocysteine biosynthesis; L-homocysteine from S-adenosyl-L-homocysteine: step 1/1. Functionally, may play a key role in the regulation of the intracellular concentration of adenosylhomocysteine. The polypeptide is Adenosylhomocysteinase (Mycobacterium tuberculosis (strain ATCC 25177 / H37Ra)).